A 150-amino-acid polypeptide reads, in one-letter code: Ribosome maturation factor RimP (150 aa).

Belongs to the RimP family.

The protein localises to the cytoplasm. Required for maturation of 30S ribosomal subunits. In Methylococcus capsulatus (strain ATCC 33009 / NCIMB 11132 / Bath), this protein is Ribosome maturation factor RimP.